The following is a 930-amino-acid chain: Translation initiation factor IF-2 (930 aa).

Residues 50–67 are compositionally biased toward low complexity; it reads FKPAAAPKVEAKPAAPKV. Disordered stretches follow at residues 50 to 195 and 260 to 346; these read FKPA…PRID and EVVP…HELP. Composition is skewed to basic and acidic residues over residues 68 to 90 and 110 to 125; these read SAEK…EAKP and FKAE…AERR. Positions 129–141 are enriched in low complexity; sequence KGNNRDQQQNGNR. 2 stretches are compositionally biased toward basic and acidic residues: residues 157-167 and 262-295; these read RDNRRFNDQAK and VPEK…DGPR. The segment covering 309–318 has biased composition (low complexity); that stretch reads NQKNSNWNNN. Residues 337-346 are compositionally biased toward basic and acidic residues; sequence VTERKFHELP. In terms of domain architecture, tr-type G spans 432–599; it reads ERPPVVTIMG…TVLLVAEIQE (168 aa). The interval 441-448 is G1; that stretch reads GHVDHGKT. 441-448 lines the GTP pocket; sequence GHVDHGKT. The segment at 466-470 is G2; it reads GITQH. The interval 487-490 is G3; it reads DTPG. Residues 487-491 and 541-544 each bind GTP; these read DTPGH and NKID. A G4 region spans residues 541 to 544; the sequence is NKID. A G5 region spans residues 577–579; that stretch reads SAK.

Belongs to the TRAFAC class translation factor GTPase superfamily. Classic translation factor GTPase family. IF-2 subfamily.

It localises to the cytoplasm. Its function is as follows. One of the essential components for the initiation of protein synthesis. Protects formylmethionyl-tRNA from spontaneous hydrolysis and promotes its binding to the 30S ribosomal subunits. Also involved in the hydrolysis of GTP during the formation of the 70S ribosomal complex. The sequence is that of Translation initiation factor IF-2 from Streptococcus pneumoniae (strain ATCC BAA-255 / R6).